Here is a 433-residue protein sequence, read N- to C-terminus: Enolase (433 aa).

Residue glutamine 163 participates in (2R)-2-phosphoglycerate binding. Residue glutamate 205 is the Proton donor of the active site. Aspartate 242, glutamate 286, and aspartate 313 together coordinate Mg(2+). Positions 338, 367, 368, and 389 each coordinate (2R)-2-phosphoglycerate. Lysine 338 (proton acceptor) is an active-site residue.

This sequence belongs to the enolase family. Requires Mg(2+) as cofactor.

Its subcellular location is the cytoplasm. It localises to the secreted. The protein resides in the cell surface. It carries out the reaction (2R)-2-phosphoglycerate = phosphoenolpyruvate + H2O. Its pathway is carbohydrate degradation; glycolysis; pyruvate from D-glyceraldehyde 3-phosphate: step 4/5. Catalyzes the reversible conversion of 2-phosphoglycerate (2-PG) into phosphoenolpyruvate (PEP). It is essential for the degradation of carbohydrates via glycolysis. This is Enolase from Koribacter versatilis (strain Ellin345).